The primary structure comprises 426 residues: Serine--tRNA ligase (426 aa).

233 to 235 (TAE) provides a ligand contact to L-serine. ATP is bound at residue 264–266 (RSE). Glu287 contacts L-serine. ATP is bound at residue 351 to 354 (EISS). Residue Ser387 coordinates L-serine.

This sequence belongs to the class-II aminoacyl-tRNA synthetase family. Type-1 seryl-tRNA synthetase subfamily. Homodimer. The tRNA molecule binds across the dimer.

It is found in the cytoplasm. It catalyses the reaction tRNA(Ser) + L-serine + ATP = L-seryl-tRNA(Ser) + AMP + diphosphate + H(+). The enzyme catalyses tRNA(Sec) + L-serine + ATP = L-seryl-tRNA(Sec) + AMP + diphosphate + H(+). The protein operates within aminoacyl-tRNA biosynthesis; selenocysteinyl-tRNA(Sec) biosynthesis; L-seryl-tRNA(Sec) from L-serine and tRNA(Sec): step 1/1. Functionally, catalyzes the attachment of serine to tRNA(Ser). Is also able to aminoacylate tRNA(Sec) with serine, to form the misacylated tRNA L-seryl-tRNA(Sec), which will be further converted into selenocysteinyl-tRNA(Sec). This Clostridium tetani (strain Massachusetts / E88) protein is Serine--tRNA ligase.